The primary structure comprises 268 residues: 3-deoxy-manno-octulosonate cytidylyltransferase (268 aa).

This sequence belongs to the KdsB family.

Its subcellular location is the cytoplasm. The catalysed reaction is 3-deoxy-alpha-D-manno-oct-2-ulosonate + CTP = CMP-3-deoxy-beta-D-manno-octulosonate + diphosphate. It participates in nucleotide-sugar biosynthesis; CMP-3-deoxy-D-manno-octulosonate biosynthesis; CMP-3-deoxy-D-manno-octulosonate from 3-deoxy-D-manno-octulosonate and CTP: step 1/1. It functions in the pathway bacterial outer membrane biogenesis; lipopolysaccharide biosynthesis. Its function is as follows. Activates KDO (a required 8-carbon sugar) for incorporation into bacterial lipopolysaccharide in Gram-negative bacteria. In Ralstonia pickettii (strain 12J), this protein is 3-deoxy-manno-octulosonate cytidylyltransferase.